Here is a 412-residue protein sequence, read N- to C-terminus: Isovaleryl-CoA dehydrogenase, mitochondrial (412 aa).

The N-terminal 25 residues, 1–25, are a transit peptide targeting the mitochondrion; it reads MHKLFVARSVKSALFRIKNHQKPQF. FAD contacts are provided by residues 154–163 and 187–189; these read LAMSEPNAGS and WCT. Ser163 is a binding site for substrate. Residues 209 to 210, Tyr264, and 271 to 274 contribute to the substrate site; these read SK and DLER. Glu273 acts as the Proton acceptor in catalysis. FAD-binding positions include Arg299, Gln310, and 367 to 371; that span reads QCLGG. 394-395 serves as a coordination point for substrate; the sequence is AG. FAD is bound at residue 396–398; sequence TSE.

The protein belongs to the acyl-CoA dehydrogenase family. In terms of assembly, homotetramer. FAD is required as a cofactor. As to expression, expressed in flowers and tubers.

The protein resides in the mitochondrion. It catalyses the reaction 3-methylbutanoyl-CoA + oxidized [electron-transfer flavoprotein] + H(+) = 3-methylbut-2-enoyl-CoA + reduced [electron-transfer flavoprotein]. The protein operates within amino-acid degradation; L-leucine degradation; (S)-3-hydroxy-3-methylglutaryl-CoA from 3-isovaleryl-CoA: step 1/3. Its function is as follows. Involved in the catabolism of amino acids. Uses isovaleryl-CoA as substrate. Minor activity detected with 2-methylpalmitoyl-CoA or 2-methylbutanoyl-CoA, but no activity with short- and medium-straight chain acyl-CoA esters or with 2-methylhexanoyl-CoA. The protein is Isovaleryl-CoA dehydrogenase, mitochondrial (IVD) of Solanum tuberosum (Potato).